Here is a 616-residue protein sequence, read N- to C-terminus: Dihydroxy-acid dehydratase (616 aa).

Asp-81 contributes to the Mg(2+) binding site. A [2Fe-2S] cluster-binding site is contributed by Cys-122. Mg(2+)-binding residues include Asp-123 and Lys-124. An N6-carboxylysine modification is found at Lys-124. Cys-195 serves as a coordination point for [2Fe-2S] cluster. Glu-491 lines the Mg(2+) pocket. Residue Ser-517 is the Proton acceptor of the active site.

The protein belongs to the IlvD/Edd family. Homodimer. The cofactor is [2Fe-2S] cluster. Requires Mg(2+) as cofactor.

It carries out the reaction (2R)-2,3-dihydroxy-3-methylbutanoate = 3-methyl-2-oxobutanoate + H2O. The enzyme catalyses (2R,3R)-2,3-dihydroxy-3-methylpentanoate = (S)-3-methyl-2-oxopentanoate + H2O. The protein operates within amino-acid biosynthesis; L-isoleucine biosynthesis; L-isoleucine from 2-oxobutanoate: step 3/4. It participates in amino-acid biosynthesis; L-valine biosynthesis; L-valine from pyruvate: step 3/4. In terms of biological role, functions in the biosynthesis of branched-chain amino acids. Catalyzes the dehydration of (2R,3R)-2,3-dihydroxy-3-methylpentanoate (2,3-dihydroxy-3-methylvalerate) into 2-oxo-3-methylpentanoate (2-oxo-3-methylvalerate) and of (2R)-2,3-dihydroxy-3-methylbutanoate (2,3-dihydroxyisovalerate) into 2-oxo-3-methylbutanoate (2-oxoisovalerate), the penultimate precursor to L-isoleucine and L-valine, respectively. The chain is Dihydroxy-acid dehydratase from Klebsiella pneumoniae (strain 342).